We begin with the raw amino-acid sequence, 176 residues long: Nucleoside triphosphate/diphosphate phosphatase (176 aa).

R23 acts as the Proton donor in catalysis. 6 residues coordinate Mg(2+): N87, D103, D105, D107, D120, and E123.

The protein belongs to the Ntdp family. Mg(2+) is required as a cofactor.

It carries out the reaction a ribonucleoside 5'-triphosphate + H2O = a ribonucleoside 5'-diphosphate + phosphate + H(+). The catalysed reaction is a ribonucleoside 5'-diphosphate + H2O = a ribonucleoside 5'-phosphate + phosphate + H(+). In terms of biological role, has nucleoside phosphatase activity towards nucleoside triphosphates and nucleoside diphosphates. This is Nucleoside triphosphate/diphosphate phosphatase (yjjG) from Lactococcus lactis subsp. lactis (strain IL1403) (Streptococcus lactis).